The following is a 486-amino-acid chain: Cephamycin export protein CmcT (486 aa).

Helical transmembrane passes span 24–44 (VLACTAHFLVVFDTSVITVAL), 56–76 (ASLQWVVNSYTLAFAGLLLFG), 88–108 (VFLGGLAVFTLTSLIGGLATS), 121–141 (AGAAVLAPLAVTMLTTSFAEG), 153–173 (AVALVGGASGNLLGGVFTEFL), 178–198 (VLLVNVPIGIPVLFLAARVLA), 210–230 (LDLPGAVLATAGLTLLTLGVS), 241–261 (AVAVPLAGGLLALLAFVVVEA), 284–304 (LAMLLAGASQVPVWFFLTLSM), 317–337 (LGFVPHALVMLVVGLRVVPWL), 345–365 (VLIAAGAAIGALGFWWQSLLT), 369–389 (AYLGGILGPAVLISIGGGLVG), 418–438 (FGGAFGLAVLLTVTGSGTSGS), and 450–470 (FVGIAVFMLAIAVLTPVLPAL).

The protein belongs to the major facilitator superfamily.

It localises to the cell membrane. In terms of biological role, involved in cephamycin export. This Amycolatopsis lactamdurans (Nocardia lactamdurans) protein is Cephamycin export protein CmcT (cmcT).